Here is a 300-residue protein sequence, read N- to C-terminus: 4-diphosphocytidyl-2-C-methyl-D-erythritol kinase (300 aa).

Residue Lys17 is part of the active site. Residue 102–112 coordinates ATP; it reads PVAAGIGGGSA. The active site involves Asp144.

It belongs to the GHMP kinase family. IspE subfamily.

The enzyme catalyses 4-CDP-2-C-methyl-D-erythritol + ATP = 4-CDP-2-C-methyl-D-erythritol 2-phosphate + ADP + H(+). It participates in isoprenoid biosynthesis; isopentenyl diphosphate biosynthesis via DXP pathway; isopentenyl diphosphate from 1-deoxy-D-xylulose 5-phosphate: step 3/6. Its function is as follows. Catalyzes the phosphorylation of the position 2 hydroxy group of 4-diphosphocytidyl-2C-methyl-D-erythritol. This chain is 4-diphosphocytidyl-2-C-methyl-D-erythritol kinase, found in Bradyrhizobium sp. (strain ORS 278).